The following is a 558-amino-acid chain: DNA ligase B (558 aa).

Lys-124 serves as the catalytic N6-AMP-lysine intermediate.

This sequence belongs to the NAD-dependent DNA ligase family. LigB subfamily.

The catalysed reaction is NAD(+) + (deoxyribonucleotide)n-3'-hydroxyl + 5'-phospho-(deoxyribonucleotide)m = (deoxyribonucleotide)n+m + AMP + beta-nicotinamide D-nucleotide.. Functionally, catalyzes the formation of phosphodiester linkages between 5'-phosphoryl and 3'-hydroxyl groups in double-stranded DNA using NAD as a coenzyme and as the energy source for the reaction. The polypeptide is DNA ligase B (Klebsiella pneumoniae (strain 342)).